Here is a 505-residue protein sequence, read N- to C-terminus: Activin receptor type-1B (505 aa).

Positions 1–23 (MAESAGASSFFPLVVLLLAGSGG) are cleaved as a signal peptide. Residues 24-126 (SGPRGIQALL…EHPSMWGPVE (103 aa)) lie on the Extracellular side of the membrane. N43 carries N-linked (GlcNAc...) asparagine glycosylation. Residues 127 to 149 (LVGIIAGPVFLLFLIIIIVFLVI) traverse the membrane as a helical segment. Over 150–505 (NYHQRVYHNR…QLSVQEDVKI (356 aa)) the chain is Cytoplasmic. Residues 177–206 (KTLQDLVYDLSTSGSGSGLPLFVQRTVART) form the GS domain. In terms of domain architecture, Protein kinase spans 207 to 497 (IVLQEIIGKG…LRIKKTLSQL (291 aa)). Residues 213–221 (IGKGRFGEV) and K234 contribute to the ATP site. The active-site Proton acceptor is the D335. Y380 carries the post-translational modification Phosphotyrosine.

This sequence belongs to the protein kinase superfamily. TKL Ser/Thr protein kinase family. TGFB receptor subfamily. In terms of assembly, forms an activin receptor complex with activin receptor type-2 (ACVR2A or ACVR2B). Part of a complex consisting of MAGI2/ARIP1, ACVR2A, ACVR1B and SMAD3. Interacts with SMAD2 and SMAD3. Interacts with SMAD7. Interacts with FKBP1A. Interacts with IGSF1. Interacts with CRIPTO. Interacts with TDP2. Interacts with TSC22D1/TSC-22. Requires Mg(2+) as cofactor. Mn(2+) serves as cofactor. Autophosphorylated. Phosphorylated by activin receptor type-2 (ACVR2A or ACVR2B) in response to activin-binding at serine and threonine residues in the GS domain. Phosphorylation of ACVR1B by activin receptor type-2 regulates association with SMAD7. In terms of processing, ubiquitinated. Level of ubiquitination is regulated by the SMAD7-SMURF1 complex. Post-translationally, ubiquitinated. In terms of tissue distribution, urogenital ridge, testis, ovary, brain and lungs.

The protein localises to the cell membrane. It carries out the reaction L-threonyl-[receptor-protein] + ATP = O-phospho-L-threonyl-[receptor-protein] + ADP + H(+). It catalyses the reaction L-seryl-[receptor-protein] + ATP = O-phospho-L-seryl-[receptor-protein] + ADP + H(+). With respect to regulation, activin receptor type-2 (ACVR2A or ACVR2B) activates the type-1 receptor through phosphorylation of its regulatory GS domain. Functionally, transmembrane serine/threonine kinase activin type-1 receptor forming an activin receptor complex with activin receptor type-2 (ACVR2A or ACVR2B). Transduces the activin signal from the cell surface to the cytoplasm and is thus regulating a many physiological and pathological processes including neuronal differentiation and neuronal survival, hair follicle development and cycling, FSH production by the pituitary gland, wound healing, extracellular matrix production, immunosuppression and carcinogenesis. Activin is also thought to have a paracrine or autocrine role in follicular development in the ovary. Within the receptor complex, type-2 receptors (ACVR2A and/or ACVR2B) act as a primary activin receptors whereas the type-1 receptors like ACVR1B act as downstream transducers of activin signals. Activin binds to type-2 receptor at the plasma membrane and activates its serine-threonine kinase. The activated receptor type-2 then phosphorylates and activates the type-1 receptor such as ACVR1B. Once activated, the type-1 receptor binds and phosphorylates the SMAD proteins SMAD2 and SMAD3, on serine residues of the C-terminal tail. Soon after their association with the activin receptor and subsequent phosphorylation, SMAD2 and SMAD3 are released into the cytoplasm where they interact with the common partner SMAD4. This SMAD complex translocates into the nucleus where it mediates activin-induced transcription. Inhibitory SMAD7, which is recruited to ACVR1B through FKBP1A, can prevent the association of SMAD2 and SMAD3 with the activin receptor complex, thereby blocking the activin signal. Activin signal transduction is also antagonized by the binding to the receptor of inhibin-B via the IGSF1 inhibin coreceptor. ACVR1B also phosphorylates TDP2. The chain is Activin receptor type-1B (Acvr1b) from Rattus norvegicus (Rat).